Here is a 446-residue protein sequence, read N- to C-terminus: Baeyer-Villiger oxidase mdpL (446 aa).

Belongs to the AflY oxidoreductase family. The cofactor is NADPH.

Its pathway is secondary metabolite biosynthesis. Its function is as follows. Baeyer-Villiger oxidase; part of the gene cluster that mediates the biosynthesis of monodictyphenone, a prenyl xanthone derivative. The pathway begins with the synthesis of atrochrysone thioester by the polyketide synthase (PKS) mdpG. The atrochrysone carboxyl ACP thioesterase mdpF then breaks the thioester bond and releases the atrochrysone carboxylic acid from mdpG. The atrochrysone carboxylic acid is then converted to atrochrysone which is further transformed into emodin anthrone. The next step is performed by the anthrone oxygenase mdpH that catalyzes the oxidation of emodinanthrone to emodin. Emodin is further modified to yield monodictyphenone via several steps involving mdpB, mdpC mdpJ, mdpK and mdpL. These enzymes with xptA, xptB and xptC are also proposed to be involved in the synthesis of shamixanthone from emodin. Especially, direct reduction of emodin by the short chain dehydrogenase mdpC followed by dehydration catalyzed by the scytalone dehydratase-like protein mdpB gives loss of oxygen and formation of chrysophanol intermediate in two simple steps. The protein is Baeyer-Villiger oxidase mdpL of Emericella nidulans (strain FGSC A4 / ATCC 38163 / CBS 112.46 / NRRL 194 / M139) (Aspergillus nidulans).